Reading from the N-terminus, the 199-residue chain is Achaete-scute homolog 1 (199 aa).

A disordered region spans residues 37–56 (PAEEQQASKAKPIKRQRSAS). One can recognise a bHLH domain in the interval 81 to 133 (AAVARRNERERNRVKLVNLGFATLREHVPNGAANKKMSKVETLRSAVEYIRAL). Positions 162 to 179 (HDMNSMAGSPVSSYSSDE) are enriched in polar residues. Residues 162 to 189 (HDMNSMAGSPVSSYSSDEGSYDPLSPEE) form a disordered region.

In terms of assembly, efficient DNA binding requires dimerization with another bHLH protein. Neuronal precursor cells.

It is found in the nucleus. Transcription factor that plays a key role in neuronal differentiation: acts as a pioneer transcription factor, accessing closed chromatin to allow other factors to bind and activate neural pathways. Directly binds the E box motif (5'-CANNTG-3') on promoters and promotes transcription of neuronal genes. The combination of three transcription factors, ASCL1, POU3F2/BRN2 and MYT1L, is sufficient to reprogram fibroblasts and other somatic cells into induced neuronal (iN) cells in vitro. This Xenopus laevis (African clawed frog) protein is Achaete-scute homolog 1 (ascl1).